The chain runs to 488 residues: Protein kinase C and casein kinase substrate in neurons 2 protein (488 aa).

The F-BAR domain maps to 11-282 (VEVSSDSFWE…SIKAADAVED (272 aa)). Residues 25 to 274 (KRTVKRIDDG…GIYRELEQSI (250 aa)) are a coiled coil. Residue Lys53 is modified to N6-acetyllysine. Residues 163–176 (CKEEKLAVSREANS) show a composition bias toward basic and acidic residues. Residues 163–183 (CKEEKLAVSREANSKADPSLN) form a disordered region. Position 273 is a phosphoserine (Ser273). At Ser315 the chain carries Phosphoserine; by PKC. Residues 316 to 429 (RREKKKAADG…PFDEDTTSGT (114 aa)) form a disordered region. Positions 329–364 (TGINQTGDQSGQNKPSSNLSVPSNPAQSTQLQSSYN) are enriched in polar residues. The short motif at 364 to 366 (NPF) is the NPF1 element. Phosphoserine; by IKKB is present on Ser375. Residues 386–396 (NVSSYEKTQNY) are compositionally biased toward polar residues. Ser401 carries the phosphoserine modification. The span at 406–418 (NNPFSSTDANGDS) shows a compositional bias: polar residues. The short motif at 407–409 (NPF) is the NPF2 element. An NPF3 motif is present at residues 419–421 (NPF). The SH3 domain occupies 428–488 (GTEVRVRALY…YPANYVEAIQ (61 aa)). Ser448 bears the Phosphoserine mark.

Belongs to the PACSIN family. As to quaternary structure, homodimer. May form heterooligomers with other PACSINs. Interacts (via NPF motifs) with EHD1 (via EH domain). Interacts with EHD3. Interacts (via the SH3 domain) with MICALL1. Interacts with RAC1. Interacts (via SH3 domain) with DNM1, SYN1, SYNJ1 and WASL. Interacts with CAV1. Interacts with TRPV4. Forms a complex with EHD4 and MICALL1; the complex controls CDH5 trafficking and coordinates angiogenesis. In terms of processing, phosphorylated by casein kinase 2 (CK2) and protein kinase C (PKC). Phosphorylation by PKC probably decreases the membrane binding and tubulation capacities of PACSIN2, thereby modulating the lifetime of caveolae. As to expression, widely expressed (at protein level). Isoforms 1/3 are predominantly expressed in heart and in PC-12 cells, a pheochromocytoma cell line (at protein level). Isoforms 2/4 are widely expressed with highest levels in muscle, testis and brain (at protein level).

It localises to the cytoplasm. Its subcellular location is the cytoskeleton. It is found in the cytoplasmic vesicle membrane. The protein resides in the cell projection. The protein localises to the ruffle membrane. It localises to the early endosome. Its subcellular location is the recycling endosome membrane. It is found in the cell membrane. The protein resides in the membrane. The protein localises to the caveola. It localises to the cell junction. Its subcellular location is the adherens junction. In terms of biological role, regulates the morphogenesis and endocytosis of caveolae. Lipid-binding protein that is able to promote the tubulation of the phosphatidic acid-containing membranes it preferentially binds. Plays a role in intracellular vesicle-mediated transport. Involved in the endocytosis of cell-surface receptors like the EGF receptor, contributing to its internalization in the absence of EGF stimulus. Facilitates endothelial front-rear polarity during migration by recruiting EHD4 and MICALL1 to asymmetric adherens junctions between leader and follower cells. The protein is Protein kinase C and casein kinase substrate in neurons 2 protein (Pacsin2) of Rattus norvegicus (Rat).